The primary structure comprises 647 residues: Threonine--tRNA ligase (647 aa).

Residues 1 to 61 (MINITFPDGA…TEDGSIEIVT (61 aa)) form the TGS domain. The interval 242–540 (DHRKLGKELD…LIENYKGAFP (299 aa)) is catalytic. Zn(2+) is bound by residues cysteine 336, histidine 387, and histidine 517.

Belongs to the class-II aminoacyl-tRNA synthetase family. In terms of assembly, homodimer. The cofactor is Zn(2+).

Its subcellular location is the cytoplasm. It carries out the reaction tRNA(Thr) + L-threonine + ATP = L-threonyl-tRNA(Thr) + AMP + diphosphate + H(+). Catalyzes the attachment of threonine to tRNA(Thr) in a two-step reaction: L-threonine is first activated by ATP to form Thr-AMP and then transferred to the acceptor end of tRNA(Thr). Also edits incorrectly charged L-seryl-tRNA(Thr). The sequence is that of Threonine--tRNA ligase from Streptococcus pneumoniae (strain P1031).